Consider the following 186-residue polypeptide: Nucleoside triphosphate pyrophosphatase (186 aa).

Asp-68 (proton acceptor) is an active-site residue.

The protein belongs to the Maf family. A divalent metal cation serves as cofactor.

It is found in the cytoplasm. The catalysed reaction is a ribonucleoside 5'-triphosphate + H2O = a ribonucleoside 5'-phosphate + diphosphate + H(+). It carries out the reaction a 2'-deoxyribonucleoside 5'-triphosphate + H2O = a 2'-deoxyribonucleoside 5'-phosphate + diphosphate + H(+). Functionally, nucleoside triphosphate pyrophosphatase. May have a dual role in cell division arrest and in preventing the incorporation of modified nucleotides into cellular nucleic acids. The chain is Nucleoside triphosphate pyrophosphatase from Prochlorococcus marinus (strain MIT 9303).